Reading from the N-terminus, the 141-residue chain is Hemoglobin subunit alpha (141 aa).

The Globin domain occupies 1 to 141 (VLSDKDKTNV…VSTVLTSKYR (141 aa)). Phosphoserine is present on Ser-3. Lys-7 is modified (N6-succinyllysine). The residue at position 8 (Thr-8) is a Phosphothreonine. Lys-11 is subject to N6-succinyllysine. N6-acetyllysine; alternate is present on Lys-16. N6-succinyllysine; alternate is present on Lys-16. Tyr-24 carries the phosphotyrosine modification. Phosphoserine is present on Ser-35. At Lys-40 the chain carries N6-succinyllysine. At Ser-49 the chain carries Phosphoserine. Residue His-58 coordinates O2. His-87 serves as a coordination point for heme b. Ser-102 is subject to Phosphoserine. Thr-108 carries the phosphothreonine modification. Ser-124 bears the Phosphoserine mark. Phosphothreonine occurs at positions 134 and 137. Phosphoserine is present on Ser-138.

The protein belongs to the globin family. Heterotetramer of two alpha chains and two beta chains. Red blood cells.

Involved in oxygen transport from the lung to the various peripheral tissues. Functionally, hemopressin acts as an antagonist peptide of the cannabinoid receptor CNR1. Hemopressin-binding efficiently blocks cannabinoid receptor CNR1 and subsequent signaling. The sequence is that of Hemoglobin subunit alpha (HBA) from Elephas maximus (Indian elephant).